A 186-amino-acid chain; its full sequence is Elongation factor P (186 aa).

Belongs to the elongation factor P family.

The protein localises to the cytoplasm. It participates in protein biosynthesis; polypeptide chain elongation. Its function is as follows. Involved in peptide bond synthesis. Stimulates efficient translation and peptide-bond synthesis on native or reconstituted 70S ribosomes in vitro. Probably functions indirectly by altering the affinity of the ribosome for aminoacyl-tRNA, thus increasing their reactivity as acceptors for peptidyl transferase. The chain is Elongation factor P from Shewanella woodyi (strain ATCC 51908 / MS32).